Here is a 272-residue protein sequence, read N- to C-terminus: MKTVSQLIDMKQKQTKISMVTAYDFPSAKQVEAAGIDMILVGDSLGMTVLGYESTVQVTLADMIHHGRAVRRGAPNTFVVVDMPIGAVGISMTQDLNHALKLYQETNANAIKAEGAHITPFIEKATAIGIPVVAHLGLTPQSVGVMGYKLQGATKEAAEQLILDAKNVEKAGAVALVLEAIPNDLAEEISKHLTIPVIGIGAGKGTDGQVLVYHDMLNYGIEHKAKFVKQFADFSVGVDGLKQYDQEVKSGAFPSEEYTYKKKIMNEVNNND.

Residues aspartate 43 and aspartate 82 each coordinate Mg(2+). Residues 43–44, aspartate 82, and lysine 112 contribute to the 3-methyl-2-oxobutanoate site; that span reads DS. Mg(2+) is bound at residue glutamate 114. The Proton acceptor role is filled by glutamate 179.

This sequence belongs to the PanB family. In terms of assembly, homodecamer; pentamer of dimers. Requires Mg(2+) as cofactor.

The protein resides in the cytoplasm. It catalyses the reaction 3-methyl-2-oxobutanoate + (6R)-5,10-methylene-5,6,7,8-tetrahydrofolate + H2O = 2-dehydropantoate + (6S)-5,6,7,8-tetrahydrofolate. The protein operates within cofactor biosynthesis; (R)-pantothenate biosynthesis; (R)-pantoate from 3-methyl-2-oxobutanoate: step 1/2. Catalyzes the reversible reaction in which hydroxymethyl group from 5,10-methylenetetrahydrofolate is transferred onto alpha-ketoisovalerate to form ketopantoate. The polypeptide is 3-methyl-2-oxobutanoate hydroxymethyltransferase (Staphylococcus aureus (strain MRSA252)).